A 737-amino-acid polypeptide reads, in one-letter code: Alpha-adducin (737 aa).

Methionine 1 is modified (N-acetylmethionine). A disordered region spans residues 1–21; it reads MNGDSRAAVVTSPPPTTAPHK. Phosphoserine is present on serine 12. Phosphoserine; by PKA is present on serine 59. Serine 64 bears the Phosphoserine mark. A Phosphothreonine modification is found at threonine 331. Phosphoserine occurs at positions 334, 353, 355, 358, and 366. Serine 408 is subject to Phosphoserine; by PKA. Disordered stretches follow at residues 421–486 and 576–737; these read FASD…SAVP and RREV…KSDS. Serine 427 is subject to Phosphoserine. Threonine 429 carries the phosphothreonine modification. Position 431 is a phosphoserine (serine 431). Serine 436 is subject to Phosphoserine; by PKA. Phosphothreonine; by ROCK2 is present on threonine 445. Serine 464 and serine 465 each carry phosphoserine. The residue at position 480 (threonine 480) is a Phosphothreonine; by ROCK2. Position 481 is a phosphoserine; by PKA (serine 481). Positions 576-601 are enriched in basic and acidic residues; the sequence is RREVERKQKGSEENLDEAREQKEKSP. A phosphoserine mark is found at serine 586, serine 600, and serine 613. Positions 602 to 614 are enriched in pro residues; sequence PDQPAVPHPPPST. Threonine 614 is modified (phosphothreonine). Phosphoserine occurs at positions 678, 707, 710, and 714. Positions 687-714 are enriched in low complexity; that stretch reads PVAEEAAPSAVEEGAAADPGSDGSPGKS. Over residues 715-737 the composition is skewed to basic residues; the sequence is PSKKKKKFRTPSFLKKSKKKSDS. Serine 716 bears the Phosphoserine; by PKC mark. Residues 717 to 734 are interaction with calmodulin; that stretch reads KKKKKFRTPSFLKKSKKK. A Phosphoserine; by PKA and PKC modification is found at serine 726.

Belongs to the aldolase class II family. Adducin subfamily. In terms of assembly, heterodimer of an alpha and a beta subunit or an alpha and a gamma subunit. In terms of tissue distribution, expressed in all tissues. Found in much higher levels in reticulocytes than the beta subunit.

The protein resides in the cytoplasm. The protein localises to the cytoskeleton. Its subcellular location is the cell membrane. In terms of biological role, membrane-cytoskeleton-associated protein that promotes the assembly of the spectrin-actin network. Binds to calmodulin. The chain is Alpha-adducin (ADD1) from Homo sapiens (Human).